Consider the following 565-residue polypeptide: Arginine--tRNA ligase (565 aa).

A 'HIGH' region motif is present at residues proline 120–histidine 130.

This sequence belongs to the class-I aminoacyl-tRNA synthetase family. As to quaternary structure, monomer.

The protein resides in the cytoplasm. It catalyses the reaction tRNA(Arg) + L-arginine + ATP = L-arginyl-tRNA(Arg) + AMP + diphosphate. This chain is Arginine--tRNA ligase, found in Clostridium perfringens (strain 13 / Type A).